A 218-amino-acid polypeptide reads, in one-letter code: ATP phosphoribosyltransferase (218 aa).

The protein belongs to the ATP phosphoribosyltransferase family. Short subfamily. Heteromultimer composed of HisG and HisZ subunits.

It localises to the cytoplasm. It carries out the reaction 1-(5-phospho-beta-D-ribosyl)-ATP + diphosphate = 5-phospho-alpha-D-ribose 1-diphosphate + ATP. Its pathway is amino-acid biosynthesis; L-histidine biosynthesis; L-histidine from 5-phospho-alpha-D-ribose 1-diphosphate: step 1/9. Its function is as follows. Catalyzes the condensation of ATP and 5-phosphoribose 1-diphosphate to form N'-(5'-phosphoribosyl)-ATP (PR-ATP). Has a crucial role in the pathway because the rate of histidine biosynthesis seems to be controlled primarily by regulation of HisG enzymatic activity. This is ATP phosphoribosyltransferase from Synechococcus elongatus (strain ATCC 33912 / PCC 7942 / FACHB-805) (Anacystis nidulans R2).